The chain runs to 572 residues: 2-succinyl-5-enolpyruvyl-6-hydroxy-3-cyclohexene-1-carboxylate synthase (572 aa).

Belongs to the TPP enzyme family. MenD subfamily. As to quaternary structure, homodimer. Mg(2+) is required as a cofactor. It depends on Mn(2+) as a cofactor. Requires thiamine diphosphate as cofactor.

It carries out the reaction isochorismate + 2-oxoglutarate + H(+) = 5-enolpyruvoyl-6-hydroxy-2-succinyl-cyclohex-3-ene-1-carboxylate + CO2. Its pathway is quinol/quinone metabolism; 1,4-dihydroxy-2-naphthoate biosynthesis; 1,4-dihydroxy-2-naphthoate from chorismate: step 2/7. It participates in quinol/quinone metabolism; menaquinone biosynthesis. Its function is as follows. Catalyzes the thiamine diphosphate-dependent decarboxylation of 2-oxoglutarate and the subsequent addition of the resulting succinic semialdehyde-thiamine pyrophosphate anion to isochorismate to yield 2-succinyl-5-enolpyruvyl-6-hydroxy-3-cyclohexene-1-carboxylate (SEPHCHC). This Shewanella amazonensis (strain ATCC BAA-1098 / SB2B) protein is 2-succinyl-5-enolpyruvyl-6-hydroxy-3-cyclohexene-1-carboxylate synthase.